A 550-amino-acid polypeptide reads, in one-letter code: CTP synthase (550 aa).

Residues methionine 1–leucine 270 are amidoligase domain. Serine 13 contacts CTP. Serine 13 contacts UTP. ATP is bound by residues serine 14–isoleucine 19 and aspartate 71. Aspartate 71 and glutamate 144 together coordinate Mg(2+). CTP contacts are provided by residues aspartate 151–glutamate 153, lysine 191–glutamine 196, and lysine 227. UTP contacts are provided by residues lysine 191 to glutamine 196 and lysine 227. Residues threonine 295–arginine 547 form the Glutamine amidotransferase type-1 domain. Residue glycine 356 coordinates L-glutamine. The Nucleophile; for glutamine hydrolysis role is filled by cysteine 383. Residues leucine 384 to glutamine 387, glutamate 407, and arginine 473 each bind L-glutamine. Residues histidine 520 and glutamate 522 contribute to the active site.

The protein belongs to the CTP synthase family. In terms of assembly, homotetramer.

The enzyme catalyses UTP + L-glutamine + ATP + H2O = CTP + L-glutamate + ADP + phosphate + 2 H(+). The catalysed reaction is L-glutamine + H2O = L-glutamate + NH4(+). It carries out the reaction UTP + NH4(+) + ATP = CTP + ADP + phosphate + 2 H(+). It functions in the pathway pyrimidine metabolism; CTP biosynthesis via de novo pathway; CTP from UDP: step 2/2. Allosterically activated by GTP, when glutamine is the substrate; GTP has no effect on the reaction when ammonia is the substrate. The allosteric effector GTP functions by stabilizing the protein conformation that binds the tetrahedral intermediate(s) formed during glutamine hydrolysis. Inhibited by the product CTP, via allosteric rather than competitive inhibition. In terms of biological role, catalyzes the ATP-dependent amination of UTP to CTP with either L-glutamine or ammonia as the source of nitrogen. Regulates intracellular CTP levels through interactions with the four ribonucleotide triphosphates. The polypeptide is CTP synthase (Cupriavidus necator (strain ATCC 17699 / DSM 428 / KCTC 22496 / NCIMB 10442 / H16 / Stanier 337) (Ralstonia eutropha)).